Reading from the N-terminus, the 234-residue chain is Leucyl/phenylalanyl-tRNA--protein transferase (234 aa).

The protein belongs to the L/F-transferase family.

It is found in the cytoplasm. It catalyses the reaction N-terminal L-lysyl-[protein] + L-leucyl-tRNA(Leu) = N-terminal L-leucyl-L-lysyl-[protein] + tRNA(Leu) + H(+). It carries out the reaction N-terminal L-arginyl-[protein] + L-leucyl-tRNA(Leu) = N-terminal L-leucyl-L-arginyl-[protein] + tRNA(Leu) + H(+). The enzyme catalyses L-phenylalanyl-tRNA(Phe) + an N-terminal L-alpha-aminoacyl-[protein] = an N-terminal L-phenylalanyl-L-alpha-aminoacyl-[protein] + tRNA(Phe). Its function is as follows. Functions in the N-end rule pathway of protein degradation where it conjugates Leu, Phe and, less efficiently, Met from aminoacyl-tRNAs to the N-termini of proteins containing an N-terminal arginine or lysine. The chain is Leucyl/phenylalanyl-tRNA--protein transferase from Shigella flexneri serotype 5b (strain 8401).